The following is a 279-amino-acid chain: Large ribosomal subunit protein uL2 (279 aa).

2 disordered regions span residues 30 to 59 (EKSL…GGHK) and 225 to 279 (VMNP…KNKR). Residues 50-59 (TTRHKGGGHK) are compositionally biased toward basic residues. Over residues 253–268 (PEGRTRRPNKESDKLI) the composition is skewed to basic and acidic residues. Positions 269 to 279 (VRRRRTGKNKR) are enriched in basic residues.

The protein belongs to the universal ribosomal protein uL2 family. As to quaternary structure, part of the 50S ribosomal subunit. Forms a bridge to the 30S subunit in the 70S ribosome.

One of the primary rRNA binding proteins. Required for association of the 30S and 50S subunits to form the 70S ribosome, for tRNA binding and peptide bond formation. It has been suggested to have peptidyltransferase activity; this is somewhat controversial. Makes several contacts with the 16S rRNA in the 70S ribosome. The sequence is that of Large ribosomal subunit protein uL2 from Kocuria rhizophila (strain ATCC 9341 / DSM 348 / NBRC 103217 / DC2201).